Reading from the N-terminus, the 530-residue chain is Cation transporter HKT2;2 (530 aa).

Topologically, residues 1–40 (MTSIYQEFIHTKCQSFRSIGRYVLHSIVLIYRFVSLHVHP) are cytoplasmic. 2 helical membrane passes run 41 to 61 (FWIQ…LLMF) and 102 to 122 (IVVL…FLGL). Over 123–186 (MLRLKHKHNP…DLKRSKRLRW (64 aa)) the chain is Cytoplasmic. Helical transmembrane passes span 187 to 207 (FLGF…FLLV) and 260 to 280 (GLLL…PLFL). Residues 281–317 (RILIWFLGKVTKLKDLKLMIKNSDELQYDYLLPKLPT) lie on the Cytoplasmic side of the membrane. The next 2 membrane-spanning stretches (helical) occupy residues 318-338 (AFLA…FGSV) and 372-392 (IDCS…MYLP). Topologically, residues 393-420 (PSTTFALSNGDEKTANKKAKRKLGLVVR) are cytoplasmic. A run of 2 helical transmembrane segments spans residues 421 to 441 (NLAF…LITE) and 494 to 514 (SLSG…MLYG). Over 515–530 (RLKAFTKGTGEYWRLW) the chain is Cytoplasmic.

This sequence belongs to the TrkH potassium transport family. HKT (TC 2.A.38.3) subfamily.

It is found in the membrane. Its function is as follows. Seems to be involved in regulation of potassium-sodium homeostasis. Seems to act as a potassium-sodium cotransporter, which mediates increased potassium uptake under external sodium accumulation and contributes to salt-tolerance in cultivar indica Pokkali. This chain is Cation transporter HKT2;2, found in Oryza sativa subsp. indica (Rice).